Reading from the N-terminus, the 314-residue chain is Lipid A biosynthesis acyltransferase 2 (314 aa).

Residues leucine 17–phenylalanine 37 traverse the membrane as a helical segment. Positions histidine 137–aspartate 142 match the HXXXXD motif motif.

Belongs to the LpxL/LpxM/LpxP family. LpxM subfamily.

It localises to the cell inner membrane. The enzyme catalyses an alpha-Kdo-(2-&gt;4)-alpha-Kdo-(2-&gt;6)-(acyl)-lipid IVA + a fatty acyl-[ACP] = an alpha-Kdo-(2-&gt;4)-alpha-Kdo-(2-&gt;6)-lipid A + holo-[ACP]. Its pathway is glycolipid biosynthesis; KDO(2)-lipid A biosynthesis; KDO(2)-lipid A from CMP-3-deoxy-D-manno-octulosonate and lipid IV(A): step 4/4. It participates in bacterial outer membrane biogenesis; lipopolysaccharide biosynthesis. Its function is as follows. Catalyzes the transfer of an acyl chain from an acyl-[acyl-carrier-protein] (ACP) to a Kdo(2)-(acyl)-lipid IV(A) to form a Kdo(2)-lipid A. This is Lipid A biosynthesis acyltransferase 2 from Shigella flexneri.